Consider the following 2336-residue polypeptide: Voltage-dependent N-type calcium channel subunit alpha-1B (2336 aa).

Residues 1–37 (MVRFGDELGGRYGGTGGGERARGGGAGGAGGPGQGGL) form a disordered region. Residues 1–90 (MVRFGDELGG…DNVVRKYAKR (90 aa)) lie on the Cytoplasmic side of the membrane. The segment covering 10–37 (GRYGGTGGGERARGGGAGGAGGPGQGGL) has biased composition (gly residues). Arg-22 carries the post-translational modification Omega-N-methylarginine. An I repeat occupies 82 to 359 (NVVRKYAKRI…LVLGVLSGEF (278 aa)). Residues 91 to 114 (ITEWPPFEYMILATIIANCIVLAL) traverse the membrane as a helical segment. Topologically, residues 115–131 (EQHLPDGDKTPMSERLD) are extracellular. A helical membrane pass occupies residues 132–152 (DTEPYFIGIFCFEAGIKIIAL). At 153 to 163 (GFVFHKGSYLR) the chain is on the cytoplasmic side. The helical transmembrane segment at 164-182 (NGWNVMDFVVVLTEILATA) threads the bilayer. The Extracellular portion of the chain corresponds to 183 to 187 (GTDFD). A helical membrane pass occupies residues 188 to 211 (LRTLRAVRVLRPLKLVSGIPSLQV). Topologically, residues 212-221 (VLKSIMKAMV) are cytoplasmic. A helical transmembrane segment spans residues 222–244 (PLLQIGLLLFFAILMFAIIGLEF). The Extracellular segment spans residues 245–331 (YMGKFHKACF…NTNDAAGNTW (87 aa)). An N-linked (GlcNAc...) asparagine glycan is attached at Asn-256. The helical transmembrane segment at 332 to 356 (NWLYFIPLIIIGSFFMLNLVLGVLS) threads the bilayer. The Cytoplasmic segment spans residues 357–483 (GEFAKERERV…FLIRRMVKAQ (127 aa)). The tract at residues 379–396 (QQIERELNGYLEWIFKAE) is binding to the beta subunit. Position 411 is a phosphoserine (Ser-411). 452 to 459 (ASLKSGKT) lines the ATP pocket. The II repeat unit spans residues 469-713 (EKMFRFLIRR…VFLAIAVDNL (245 aa)). Residues 484-502 (SFYWVVLCVVALNTLCVAM) form a helical membrane-spanning segment. Residues 503–512 (VHYNQPQRLT) are Extracellular-facing. Residues 513-535 (TALYFAEFVFLGLFLTEMSLKMY) form a helical membrane-spanning segment. The Cytoplasmic segment spans residues 536–545 (GLGPRSYFRS). Ser-545 contacts a 1,2-diacyl-sn-glycero-3-phospho-(1D-myo-inositol-4,5-bisphosphate). Residues 546–567 (SFNCFDFGVIVGSIFEVVWAAI) traverse the membrane as a helical segment. Residues 568–574 (KPGTSFG) are Extracellular-facing. A helical transmembrane segment spans residues 575-587 (ISVLRALRLLRIF). A 1,2-diacyl-sn-glycero-3-phospho-(1D-myo-inositol-4,5-bisphosphate)-binding residues include Arg-585 and Lys-588. Residues 588-605 (KVTKYWNSLRNLVVSLLN) are Cytoplasmic-facing. Residues 606 to 631 (SMKSIISLLFLLFLFIVVFALLGMQL) form a helical membrane-spanning segment. Topologically, residues 632–683 (FGGQFNFQDETPTTNFDTFPAAILTVFQILTGEDWNAVMYHGIESQGGVSKG) are extracellular. Residues 684-710 (MFSSFYFIVLTLFGNYTLLNVFLAIAV) form a helical membrane-spanning segment. The Cytoplasmic portion of the chain corresponds to 711–1149 (DNLANAQELT…FCHYIVTMRY (439 aa)). Ser-746, Ser-749, and Ser-784 each carry phosphoserine. Disordered stretches follow at residues 800 to 1021 (YAST…HQPK) and 1051 to 1076 (EQPEDADNQRNVTRMGSQPSDPSTTV). 6 stretches are compositionally biased toward basic and acidic residues: residues 806–827 (VRPDMKTHMDRPLVVEPGRDGL), 870–891 (EQDRTDCPKAESTETGAREERA), 920–930 (GSPEEATEREP), 938–948 (HAQDSSKEGKE), 970–981 (GPRETENSEEPT), and 996–1021 (PPEREVAEKESNVVEGDKETRNHQPK). A compositionally biased stretch (polar residues) spans 1059–1076 (QRNVTRMGSQPSDPSTTV). At Ser-1067 the chain carries Phosphoserine. Residues 1135–1421 (NLLRRFCHYI…IFVALIIITF (287 aa)) form an III repeat. A helical membrane pass occupies residues 1150-1168 (FEMVILVVIALSSIALAAE). The Extracellular portion of the chain corresponds to 1169-1176 (DPVRTDSF). The chain crosses the membrane as a helical span at residues 1177–1201 (RNNALKYMDYIFTGVFTFEMVIKMI). Topologically, residues 1202–1215 (DLGLLLHPGAYFRD) are cytoplasmic. The helical transmembrane segment at 1216 to 1240 (LWNILDFIVVSGALVAFAFSSFMGG) threads the bilayer. Residues 1241-1246 (SKGKDI) are Extracellular-facing. The chain crosses the membrane as a helical span at residues 1247–1267 (NTIKSLRVLRVLRPLKTIKRL). Over 1268-1285 (PKLKAVFDCVVNSLKNVL) the chain is Cytoplasmic. Residues 1286–1305 (NILIVYMLFMFIFAVIAVQL) traverse the membrane as a helical segment. The Extracellular segment spans residues 1306-1392 (FKGKFFYCTD…EQGPSPGFRM (87 aa)). Residues 1393–1418 (ELSIFYVVYFVVFPFFFVNIFVALII) traverse the membrane as a helical segment. Residues 1419–1473 (ITFQEQGDKVMSECSLEKNERACIDFAISAKPLTRYMPQNKQSFQYKTWTFVVSP) lie on the Cytoplasmic side of the membrane. The stretch at 1458–1711 (NKQSFQYKTW…LFVAVIMDNF (254 aa)) is one IV repeat. The chain crosses the membrane as a helical span at residues 1474–1492 (PFEYFIMAMIALNTVVLMM). Residues 1493-1500 (KFYDAPYE) lie on the Extracellular side of the membrane. A helical membrane pass occupies residues 1501-1525 (YELMLKCLNIVFTSMFSLECILKII). At 1526–1535 (AFGVLNYFRD) the chain is on the cytoplasmic side. A helical transmembrane segment spans residues 1536–1557 (AWNVFDFVTVLGSITDILVTEI). Over 1558-1563 (ANNFIN) the chain is Extracellular. Asn-1563 is a glycosylation site (N-linked (GlcNAc...) asparagine). The chain crosses the membrane as a helical span at residues 1564-1582 (LSFLRLFRAARLIKLCRQG). Residues 1583 to 1601 (YTIRILLWTFVQSFKALPY) lie on the Cytoplasmic side of the membrane. Residues 1602–1621 (VCLLIAMLFFIYAIIGMQVF) form a helical membrane-spanning segment. At 1622–1683 (GNIALDDGTS…ANASECGSDF (62 aa)) the chain is on the extracellular side. N-linked (GlcNAc...) asparagine glycosylation occurs at Asn-1675. The chain crosses the membrane as a helical span at residues 1684-1707 (AYFYFVSFIFLCSFLMLNLFVAVI). Topologically, residues 1708–2336 (MDNFEYLTRD…YHHPDQDHWC (629 aa)) are cytoplasmic. Residues 1724–1759 (HHLDEFIRVWAEYDPAACGRISYNDMFEMLKHMSPP) enclose the EF-hand domain. 3 residues coordinate Ca(2+): Asp-1737, Arg-1743, and Asp-1748. The interval 1981–2202 (TLRGPDGEPQ…TPRPSITYKT (222 aa)) is disordered. A compositionally biased stretch (basic residues) spans 2048-2062 (SHHHHHRCHRRRDKK). Phosphoserine is present on Ser-2065. The span at 2097 to 2113 (CRRERKQERGRSQERRQ) shows a compositional bias: basic and acidic residues. The span at 2161–2177 (GSGSVNGSPLMSTSGAS) shows a compositional bias: polar residues. A phosphoserine mark is found at Ser-2221, Ser-2230, and Ser-2253.

Belongs to the calcium channel alpha-1 subunit (TC 1.A.1.11) family. CACNA1B subfamily. As to quaternary structure, multisubunit complex consisting of alpha-1, alpha-2, beta and delta subunits in a 1:1:1:1 ratio. The channel activity is directed by the pore-forming and voltage-sensitive alpha-1 subunit. In many cases, this subunit is sufficient to generate voltage-sensitive calcium channel activity. The auxiliary subunits beta and alpha-2/delta linked by a disulfide bridge regulate the channel activity. Interacts with RIMS1. Interacts with FMR1 (via C-terminus); this interaction induces a decrease in the number of presynaptic functional CACNA1B channels at the cell surface. Post-translationally, phosphorylated in vitro by CaM-kinase II, PKA, PKC and CGPK. Central nervous system.

Its subcellular location is the membrane. It carries out the reaction Ca(2+)(in) = Ca(2+)(out). With respect to regulation, is specifically blocked by omega-conotoxin GVIA. Is specifically blocked by omega-conotoxin MVIIA (ziconotide). Is insensitive to dihydropyridines (DHP). Voltage-sensitive calcium channels (VSCC) mediate the entry of calcium ions into excitable cells and are also involved in a variety of calcium-dependent processes, including muscle contraction, hormone or neurotransmitter release, gene expression, cell motility, cell division and cell death. This alpha-1B subunit gives rise to N-type calcium currents. N-type calcium channels belong to the 'high-voltage activated' (HVA) group. They are involved in pain signaling. Calcium channels containing alpha-1B subunit may play a role in directed migration of immature neurons. Mediates Ca(2+) release probability at hippocampal neuronal soma and synaptic terminals. This Rattus norvegicus (Rat) protein is Voltage-dependent N-type calcium channel subunit alpha-1B (Cacna1b).